Reading from the N-terminus, the 304-residue chain is E3 ubiquitin-protein ligase CHIP (304 aa).

The segment covering 1-10 (MKGKEEKEGG) has biased composition (basic and acidic residues). Residues 1–30 (MKGKEEKEGGARLGTGGGGSPDKSPSAQEL) are disordered. A Glycyl lysine isopeptide (Lys-Gly) (interchain with G-Cter in ubiquitin) cross-link involves residue Lys-2. A compositionally biased stretch (gly residues) spans 11–20 (ARLGTGGGGS). Residue Ser-20 is modified to Phosphoserine. Residue Lys-23 forms a Glycyl lysine isopeptide (Lys-Gly) (interchain with G-Cter in ubiquitin) linkage. Phosphoserine is present on residues Ser-24 and Ser-26. TPR repeat units follow at residues 27–60 (AQELKEQGNRLFVGRKYPEAAACYGRAITRNPLV), 61–94 (AVYYTNRALCYLKMQQPEQALADCRRALELDGQS), and 96–128 (KAHFFLGQCQLEMESYDEAIANLQRAYSLAKEQ). Positions 102–201 (GQCQLEMESY…GHIRAQQACI (100 aa)) are required for interaction with MAPK7. Residues 143-197 (AKKKRWNSIEERRIHQESELHSYLTRLIAAERERELEECQRNHEGHEDDGHIRAQ) form a required for interaction with and ubiquitination of MYOCD region. The interval 144–198 (KKKRWNSIEERRIHQESELHSYLTRLIAAERERELEECQRNHEGHEDDGHIRAQQ) is required for interaction with FOXO1. Residues 144 to 304 (KKKRWNSIEE…ISENGWVEDY (161 aa)) are required for ubiquitination of FOXO1. Phosphoserine is present on Ser-150. Residues Lys-222 and Lys-256 each participate in a glycyl lysine isopeptide (Lys-Gly) (interchain with G-Cter in ubiquitin) cross-link. Residues 227–301 (DIPDYLCGKI…DAFISENGWV (75 aa)) enclose the U-box domain. Residue Ser-274 is modified to Phosphoserine.

Homodimer. Interacts with BAG2, and with the E2 ubiquitin conjugating enzymes UBE2D1, UBE2D2 and UBE2D3. Detected in a ternary complex containing STUB1, HSPA1A and HSPBP1. Part of a complex composed of STUB1/CHIP, VCP/p97, CHRNA3, and UBXN2A that modulates the ubiquitination and endoplasmic reticulum-associated degradation (ERAD) of CHRNA3. Within the complex UBXN2A acts as a scaffold protein required for the interaction of CHRNA3 with VCP/p97, this interaction also inhibits CHRNA3 ubiquitination by STUB1/CHIP and subsequently ERAD. Interacts with MKKS. Interacts with DNAAF4. Interacts (via the U-box domain) with the UBE2V2-UBE2N heterodimer; the complex has a specific 'Lys-63'-linked polyubiquitination activity. Interacts (when monoubiquitinated) with ATXN3. Interacts with UBE2W. Interacts with DNAJB6. Interacts with FLCN and HSP90AA1. Interacts with HSP90. Interacts with UBE2N and UBE2V1. Interacts (via TPR repeats) with HSPA8 (via C-terminus). Interacts (via TPR repeats) with HSPA1A (via C-terminus). Interacts with the non-acetylated form of HSPA1A and HSPA1B. Interacts with SMAD3 and HSP90AB1. Interacts with UBE4B. Interacts with PRMT5. Interacts with MYOCD (via C-terminus). Interacts with FOXO1 (when phosphorylated on 'Ser-253'). Interacts with MAPK7/ERK5; the interaction is enhanced in the presence of IGF1 or MAP2K5 and promotes STUB1/CHIP E3 ligase activity. Interacts with and ubiquitinates ESR1; the interaction is promoted in the absence of estradiol (17-beta-estradiol/E2). Interacts with ESR2. Interacts with and ubiquitinates NFATC3; HSPA1A/HSP70 is required as a co-chaperone. In macrophages, interacts with PAQR3; the interaction promotes PPARG poylubiquitination and STUB1-mediated degradation. Component of the chaperone-assisted selective autophagy (CASA) complex consisting of BAG3, HSPA8/HSC70, HSPB8 and STUB1/CHIP. Auto-ubiquitinated; mediated by UBE2D1 and UBE2D2 and enhanced in the presence of MAP2K5. Monoubiquitinated at Lys-2 following cell stress by UBE2W, promoting the interaction with ATXN3. Expressed in the brain.

It localises to the cytoplasm. Its subcellular location is the nucleus. The protein resides in the mitochondrion. It catalyses the reaction S-ubiquitinyl-[E2 ubiquitin-conjugating enzyme]-L-cysteine + [acceptor protein]-L-lysine = [E2 ubiquitin-conjugating enzyme]-L-cysteine + N(6)-ubiquitinyl-[acceptor protein]-L-lysine.. The protein operates within protein modification; protein ubiquitination. In terms of biological role, E3 ubiquitin-protein ligase which targets misfolded chaperone substrates towards proteasomal degradation. Plays a role in the maintenance of mitochondrial morphology and promotes mitophagic removal of dysfunctional mitochondria; thereby acts as a protector against apoptosis in response to cellular stress. Negatively regulates vascular smooth muscle contraction, via degradation of the transcriptional activator MYOCD and subsequent loss of transcription of genes involved in vascular smooth muscle contraction. Promotes survival and proliferation of cardiac smooth muscle cells via ubiquitination and degradation of FOXO1, resulting in subsequent repression of FOXO1-mediated transcription of pro-apoptotic genes. Ubiquitinates ICER-type isoforms of CREM and targets them for proteasomal degradation, thereby acts as a positive effector of MAPK/ERK-mediated inhibition of apoptosis in cardiomyocytes. Inhibits lipopolysaccharide-induced apoptosis and hypertrophy in cardiomyocytes, via ubiquitination and subsequent proteasomal degradation of NFATC3. Collaborates with ATXN3 in the degradation of misfolded chaperone substrates: ATXN3 restricting the length of ubiquitin chain attached to STUB1/CHIP substrates and preventing further chain extension. Ubiquitinates NOS1 in concert with Hsp70 and Hsp40. Modulates the activity of several chaperone complexes, including Hsp70, Hsc70 and Hsp90. Ubiquitinates CHRNA3 targeting it for endoplasmic reticulum-associated degradation in cortical neurons, as part of the STUB1-VCP-UBXN2A complex. Ubiquitinates and promotes ESR1 proteasomal degradation in response to age-related circulating estradiol (17-beta-estradiol/E2) decline, thereby promotes neuronal apoptosis in response to ischemic reperfusion injury. Mediates transfer of non-canonical short ubiquitin chains to HSPA8 that have no effect on HSPA8 degradation. Mediates polyubiquitination of DNA polymerase beta (POLB) at 'Lys-41', 'Lys-61' and 'Lys-81', thereby playing a role in base-excision repair: catalyzes polyubiquitination by amplifying the HUWE1/ARF-BP1-dependent monoubiquitination and leading to POLB-degradation by the proteasome. Mediates polyubiquitination of CYP3A4. Ubiquitinates EPHA2 and may regulate the receptor stability and activity through proteasomal degradation. Acts as a co-chaperone for HSPA1A and HSPA1B chaperone proteins and promotes ubiquitin-mediated protein degradation. Negatively regulates the suppressive function of regulatory T-cells (Treg) during inflammation by mediating the ubiquitination and degradation of FOXP3 in a HSPA1A/B-dependent manner. Catalyzes monoubiquitination of SIRT6, preventing its degradation by the proteasome. Likely mediates polyubiquitination and down-regulates plasma membrane expression of PD-L1/CD274, an immune inhibitory ligand critical for immune tolerance to self and antitumor immunity. Negatively regulates TGF-beta signaling by modulating the basal level of SMAD3 via ubiquitin-mediated degradation. Plays a role in the degradation of TP53. Mediates ubiquitination of RIPK3 leading to its subsequent proteasome-dependent degradation. May regulate myosin assembly in striated muscles together with UBE4B and VCP/p97 by targeting myosin chaperone UNC45B for proteasomal degradation. Ubiquitinates PPARG in macrophages playing a role in M2 macrophages polarization and angiogenesis. In Mus musculus (Mouse), this protein is E3 ubiquitin-protein ligase CHIP.